A 333-amino-acid polypeptide reads, in one-letter code: Gamma-D-glutamyl-L-lysine dipeptidyl-peptidase (333 aa).

An N-terminal signal peptide occupies residues methionine 1 to alanine 23. Substrate is bound by residues glutamate 83, tyrosine 118, aspartate 237–serine 239, and aspartate 256–serine 257. The NlpC/P60 domain maps to threonine 208–leucine 332. The Nucleophile role is filled by cysteine 238. Histidine 291 (proton acceptor) is an active-site residue. Histidine 303 is an active-site residue.

The protein belongs to the peptidase C40 family. Monomer in solution.

It carries out the reaction The enzyme releases L-Ala-gamma-D-Glu dipeptides from cell wall peptides via cleavage of an L-Ala-gamma-D-Glu-|-L-Lys bond.. It participates in cell wall degradation; peptidoglycan degradation. In terms of biological role, specifically hydrolyzes gamma-D-glutamyl-L-lysine bonds in murein peptides, releasing L-Ala-D-Glu. This is Gamma-D-glutamyl-L-lysine dipeptidyl-peptidase from Bacillus cereus (strain ATCC 10987 / NRS 248).